We begin with the raw amino-acid sequence, 101 residues long: Small ribosomal subunit protein uS14A (101 aa).

2 disordered regions span residues 1–20 and 28–72; these read MAKKSKIAKNDRRQETVARY and TEII…RPRG. 2 stretches are compositionally biased toward basic and acidic residues: residues 38–53 and 61–70; these read EAERRAAQQELRRQPR and RNRDSVDGRP.

Belongs to the universal ribosomal protein uS14 family. Part of the 30S ribosomal subunit. Contacts proteins S3 and S10.

In terms of biological role, binds 16S rRNA, required for the assembly of 30S particles and may also be responsible for determining the conformation of the 16S rRNA at the A site. This Streptomyces avermitilis (strain ATCC 31267 / DSM 46492 / JCM 5070 / NBRC 14893 / NCIMB 12804 / NRRL 8165 / MA-4680) protein is Small ribosomal subunit protein uS14A.